We begin with the raw amino-acid sequence, 325 residues long: Structure-specific endonuclease subunit SLX1 (325 aa).

Positions 10-92 (ALYTVYILRS…NNPHLSMHIP (83 aa)) constitute a GIY-YIG domain. The SLX1-type zinc finger occupies 230–284 (CVVCREEMKSGEGLHAVCTHEGCDGVGHISCWSRSFLKNNDTGSILPVQGQCPMC).

This sequence belongs to the SLX1 family. In terms of assembly, forms a heterodimer with SLX4. The cofactor is a divalent metal cation.

It is found in the nucleus. Catalytic subunit of the SLX1-SLX4 structure-specific endonuclease that resolves DNA secondary structures generated during DNA repair and recombination. Has endonuclease activity towards branched DNA substrates, introducing single-strand cuts in duplex DNA close to junctions with ss-DNA. This Chaetomium globosum (strain ATCC 6205 / CBS 148.51 / DSM 1962 / NBRC 6347 / NRRL 1970) (Soil fungus) protein is Structure-specific endonuclease subunit SLX1.